The sequence spans 165 residues: Dihydrofolate reductase type A13 (165 aa).

In terms of domain architecture, DHFR spans 7–162 (RIYLVAAMGA…ITYTHSVYAR (156 aa)).

This sequence belongs to the dihydrofolate reductase family. As to quaternary structure, homodimer.

The enzyme catalyses (6S)-5,6,7,8-tetrahydrofolate + NADP(+) = 7,8-dihydrofolate + NADPH + H(+). It participates in cofactor biosynthesis; tetrahydrofolate biosynthesis; 5,6,7,8-tetrahydrofolate from 7,8-dihydrofolate: step 1/1. In terms of biological role, key enzyme in folate metabolism. Catalyzes an essential reaction for de novo glycine and purine synthesis, and for DNA precursor synthesis. This Escherichia coli protein is Dihydrofolate reductase type A13 (dfrA13).